We begin with the raw amino-acid sequence, 207 residues long: Small ribosomal subunit protein uS4 (207 aa).

A disordered region spans residues 31–55 (KCKLDSKPGQHGRTSGARTSDYGTQ). Positions 42–53 (GRTSGARTSDYG) are enriched in polar residues. The 64-residue stretch at 97–160 (SRLDNVVYRM…KKQARIIEAL (64 aa)) folds into the S4 RNA-binding domain.

This sequence belongs to the universal ribosomal protein uS4 family. In terms of assembly, part of the 30S ribosomal subunit. Contacts protein S5. The interaction surface between S4 and S5 is involved in control of translational fidelity.

Its function is as follows. One of the primary rRNA binding proteins, it binds directly to 16S rRNA where it nucleates assembly of the body of the 30S subunit. Functionally, with S5 and S12 plays an important role in translational accuracy. This chain is Small ribosomal subunit protein uS4, found in Burkholderia vietnamiensis (strain G4 / LMG 22486) (Burkholderia cepacia (strain R1808)).